A 188-amino-acid polypeptide reads, in one-letter code: Antitoxin SocA (188 aa).

Interacts with cognate toxin SocB and with ClpX.

In terms of biological role, antitoxin component of an atypical type II toxin-antitoxin (TA) system. Unlike most type II TA systems, neutralizes the toxic activity of cognate toxin SocB by acting as an adapter to promote its degradation by ClpXP; degradation is dependent on the N-terminus of ClpX. In Caulobacter vibrioides (strain NA1000 / CB15N) (Caulobacter crescentus), this protein is Antitoxin SocA.